We begin with the raw amino-acid sequence, 398 residues long: Serpin-Z1C (398 aa).

Residues 343–367 (GTEAAASTAIKMALLQARPPSVMDF) are RCL.

The protein belongs to the serpin family.

In terms of biological role, inhibits chymotrypsin and cathepsin G in vitro. The sequence is that of Serpin-Z1C from Triticum aestivum (Wheat).